Reading from the N-terminus, the 391-residue chain is NADH-quinone oxidoreductase subunit D (391 aa).

The protein belongs to the complex I 49 kDa subunit family. In terms of assembly, NDH-1 is composed of 14 different subunits. Subunits NuoB, C, D, E, F, and G constitute the peripheral sector of the complex.

Its subcellular location is the cell inner membrane. The enzyme catalyses a quinone + NADH + 5 H(+)(in) = a quinol + NAD(+) + 4 H(+)(out). NDH-1 shuttles electrons from NADH, via FMN and iron-sulfur (Fe-S) centers, to quinones in the respiratory chain. The immediate electron acceptor for the enzyme in this species is believed to be ubiquinone. Couples the redox reaction to proton translocation (for every two electrons transferred, four hydrogen ions are translocated across the cytoplasmic membrane), and thus conserves the redox energy in a proton gradient. This Rickettsia rickettsii (strain Sheila Smith) protein is NADH-quinone oxidoreductase subunit D.